A 915-amino-acid polypeptide reads, in one-letter code: Isoleucine--tRNA ligase (915 aa).

Positions 57–67 (PYANGNLHMGH) match the 'HIGH' region motif. E554 lines the L-isoleucyl-5'-AMP pocket. The 'KMSKS' region signature appears at 595-599 (KMSKS). Residue K598 participates in ATP binding. Zn(2+)-binding residues include C885, C888, C905, and C908.

This sequence belongs to the class-I aminoacyl-tRNA synthetase family. IleS type 1 subfamily. As to quaternary structure, monomer. The cofactor is Zn(2+).

It localises to the cytoplasm. The enzyme catalyses tRNA(Ile) + L-isoleucine + ATP = L-isoleucyl-tRNA(Ile) + AMP + diphosphate. Its function is as follows. Catalyzes the attachment of isoleucine to tRNA(Ile). As IleRS can inadvertently accommodate and process structurally similar amino acids such as valine, to avoid such errors it has two additional distinct tRNA(Ile)-dependent editing activities. One activity is designated as 'pretransfer' editing and involves the hydrolysis of activated Val-AMP. The other activity is designated 'posttransfer' editing and involves deacylation of mischarged Val-tRNA(Ile). The protein is Isoleucine--tRNA ligase of Staphylococcus carnosus (strain TM300).